The following is a 275-amino-acid chain: MAGVSSESLATALAALEAKLPTASLQLAKELFGILGMVDSSAGLRRALTDPSRNGDEKSALVRQLVGGKVSADAAEVAGGLAGSRWASARDIGDALETLAATVVISVAENKSAVSASGITGLEELENDLFSFNQAVASSHEVQRALSEPQASGAAKAALAEKLVPGVSEEAKVLITQAVTQPRGIKATRLVERFAELAAKRQQRWIATVSVTRPLTSTQLSRLQAGLNALYGRELKVNINVDPALIGGIRVQVGDEVLDASVISRLGELQRQLAG.

It belongs to the ATPase delta chain family. In terms of assembly, F-type ATPases have 2 components, F(1) - the catalytic core - and F(0) - the membrane proton channel. F(1) has five subunits: alpha(3), beta(3), gamma(1), delta(1), epsilon(1). F(0) has three main subunits: a(1), b(2) and c(10-14). The alpha and beta chains form an alternating ring which encloses part of the gamma chain. F(1) is attached to F(0) by a central stalk formed by the gamma and epsilon chains, while a peripheral stalk is formed by the delta and b chains.

Its subcellular location is the cell membrane. Functionally, f(1)F(0) ATP synthase produces ATP from ADP in the presence of a proton or sodium gradient. F-type ATPases consist of two structural domains, F(1) containing the extramembraneous catalytic core and F(0) containing the membrane proton channel, linked together by a central stalk and a peripheral stalk. During catalysis, ATP synthesis in the catalytic domain of F(1) is coupled via a rotary mechanism of the central stalk subunits to proton translocation. This protein is part of the stalk that links CF(0) to CF(1). It either transmits conformational changes from CF(0) to CF(1) or is implicated in proton conduction. The sequence is that of ATP synthase subunit delta from Pseudarthrobacter chlorophenolicus (strain ATCC 700700 / DSM 12829 / CIP 107037 / JCM 12360 / KCTC 9906 / NCIMB 13794 / A6) (Arthrobacter chlorophenolicus).